Here is a 150-residue protein sequence, read N- to C-terminus: Ribonuclease HI (150 aa).

In terms of domain architecture, RNase H type-1 spans 1–142 (MSDSVELFTD…ADQLANRGVD (142 aa)). Residues Asp-10, Glu-48, Asp-70, and Asp-134 each contribute to the Mg(2+) site.

The protein belongs to the RNase H family. As to quaternary structure, monomer. The cofactor is Mg(2+).

Its subcellular location is the cytoplasm. The catalysed reaction is Endonucleolytic cleavage to 5'-phosphomonoester.. Functionally, endonuclease that specifically degrades the RNA of RNA-DNA hybrids. The polypeptide is Ribonuclease HI (Pseudomonas syringae pv. tomato (strain ATCC BAA-871 / DC3000)).